A 499-amino-acid chain; its full sequence is Lysine--tRNA ligase (499 aa).

Positions 410 and 417 each coordinate Mg(2+).

This sequence belongs to the class-II aminoacyl-tRNA synthetase family. In terms of assembly, homodimer. Requires Mg(2+) as cofactor.

The protein localises to the cytoplasm. The catalysed reaction is tRNA(Lys) + L-lysine + ATP = L-lysyl-tRNA(Lys) + AMP + diphosphate. This chain is Lysine--tRNA ligase (lysS), found in Bacillus subtilis (strain 168).